Consider the following 692-residue polypeptide: Ribosome-releasing factor 2, mitochondrial (692 aa).

The N-terminal 29 residues, 1–29 (MLKYAWQSGPKQRNRWLWHLSNQIWKRSY), are a transit peptide targeting the mitochondrion. The tr-type G domain occupies 31 to 310 (SKIRNIGILA…AVNAYLPAPE (280 aa)). GTP is bound by residues 40–47 (AHIDAGKT), 104–108 (DTPGH), and 158–161 (NKMD).

It belongs to the TRAFAC class translation factor GTPase superfamily. Classic translation factor GTPase family. EF-G/EF-2 subfamily.

It is found in the mitochondrion. Mitochondrial GTPase that mediates the disassembly of ribosomes from messenger RNA at the termination of mitochondrial protein biosynthesis. Not involved in the GTP-dependent ribosomal translocation step during translation elongation. The protein is Ribosome-releasing factor 2, mitochondrial of Drosophila sechellia (Fruit fly).